The chain runs to 198 residues: Recombination protein RecR (198 aa).

The C4-type zinc-finger motif lies at 58-73 (CKVCQTLTDKEICPIC). Positions 81-175 (KVIMVVENTR…KVSRIASGVP (95 aa)) constitute a Toprim domain.

It belongs to the RecR family.

Functionally, may play a role in DNA repair. It seems to be involved in an RecBC-independent recombinational process of DNA repair. It may act with RecF and RecO. In Lachnoclostridium phytofermentans (strain ATCC 700394 / DSM 18823 / ISDg) (Clostridium phytofermentans), this protein is Recombination protein RecR.